The following is a 409-amino-acid chain: Peptidase T (409 aa).

Position 78 (His-78) interacts with Zn(2+). Residue Asp-80 is part of the active site. Asp-140 is a Zn(2+) binding site. The active-site Proton acceptor is Glu-173. Residues Glu-174, Asp-196, and His-379 each coordinate Zn(2+).

It belongs to the peptidase M20B family. The cofactor is Zn(2+).

Its subcellular location is the cytoplasm. The enzyme catalyses Release of the N-terminal residue from a tripeptide.. In terms of biological role, cleaves the N-terminal amino acid of tripeptides. The chain is Peptidase T from Salmonella paratyphi C (strain RKS4594).